We begin with the raw amino-acid sequence, 442 residues long: Putative mannan endo-1,6-alpha-mannosidase C970.02 (442 aa).

The signal sequence occupies residues 1–19 (MSLTIFISLATILFSFAEA). N-linked (GlcNAc...) asparagine glycosylation is found at Asn25, Asn82, Asn107, Asn131, Asn201, Asn236, Asn261, Asn264, Asn277, and Asn361.

Belongs to the glycosyl hydrolase 76 family.

The enzyme catalyses Random hydrolysis of (1-&gt;6)-alpha-D-mannosidic linkages in unbranched (1-&gt;6)-mannans.. The polypeptide is Putative mannan endo-1,6-alpha-mannosidase C970.02 (Schizosaccharomyces pombe (strain 972 / ATCC 24843) (Fission yeast)).